Here is a 236-residue protein sequence, read N- to C-terminus: uncharacterized protein (236 aa).

3 disordered regions span residues 1–48 (MHLR…RTFS), 67–122 (VHTP…HSPR), and 134–192 (KLHP…PNNT). The segment covering 85 to 99 (RAHRTAKHPARRQSC) has biased composition (basic residues). Residues 180–189 (PSPAIKPSPP) show a composition bias toward pro residues.

This is an uncharacterized protein from Encephalitozoon cuniculi (strain GB-M1) (Microsporidian parasite).